The primary structure comprises 559 residues: Paxillin (559 aa).

The short motif at 3–15 (DLDALLADLESTT) is the LD motif 1 element. Residues 17–139 (HISKRPVFLT…SPTMTSTSLG (123 aa)) form a disordered region. Residue Y31 is modified to Phosphotyrosine. The span at 45-54 (VPPPVPPPPS) shows a compositional bias: pro residues. A compositionally biased stretch (low complexity) spans 79-98 (QQPQSQSPIYSSSAKSSSAS). The residue at position 118 (Y118) is a Phosphotyrosine; by FAK1. Over residues 121 to 137 (PNKQKSAEPSPTMTSTS) the composition is skewed to polar residues. The LD motif 2 motif lies at 144–156 (ELDRLLLELNAVQ). Disordered stretches follow at residues 158–213 (NPPS…GIED) and 225–262 (LESSVPSPVPAITVSQGEVSSPQRVNASQQQTRISASS). The LD motif 3 signature appears at 217 to 229 (SVESLLDELESSV). Positions 237–262 (TVSQGEVSSPQRVNASQQQTRISASS) are enriched in polar residues. The segment at 263-282 (ATRELDELMASLSDFKFMAQ) is required for binding to PARVA and ILK. Short sequence motifs (LD motif) lie at residues 266–277 (ELDELMASLSDF) and 301–313 (QLDTMLGSLQSDL). The tract at residues 281–301 (AQGKAGGSSSPPSTTPKPGSQ) is disordered. 4 consecutive LIM zinc-binding domains span residues 326–376 (CGAC…CEKD), 385–435 (CYYC…CRKD), 444–494 (CGGC…CEVH), and 503–553 (CSGC…CQNC).

As to quaternary structure, interacts (via LD motif 4) with PARVA/PARVIN and ILK. Phosphorylated on tyrosine residues during integrin-mediated cell adhesion, embryonic development, fibroblast transformation and following stimulation of cells by mitogens.

It localises to the cytoplasm. It is found in the cytoskeleton. The protein localises to the cell junction. Its subcellular location is the focal adhesion. The protein resides in the cell cortex. Functionally, cytoskeletal protein involved in actin-membrane attachment at sites of cell adhesion to the extracellular matrix (focal adhesion). Binds in vitro to vinculin as well as to the SH3 domain of c-SRC and, when tyrosine phosphorylated, to the SH2 domain of v-CRK. The protein is Paxillin (PXN) of Gallus gallus (Chicken).